Reading from the N-terminus, the 554-residue chain is Probable efflux pump gsfJ (554 aa).

A run of 14 helical transmembrane segments spans residues 54–74, 93–115, 120–140, 152–172, 181–201, 206–226, 248–268, 279–299, 321–341, 349–369, 379–399, 410–430, 447–467, and 518–538; these read LAAV…DNTI, SWYG…GKFY, IKVW…ICAV, AIAG…IGFA, LLGF…LIGG, KCFY…FLLF, LVGA…LQYG, VIGL…WEIY, IYMF…PIYF, PIGS…AAIV, IVPL…GLFY, WVGY…IAMS, IVNF…QCAF, and VFAI…FGSW.

The protein belongs to the major facilitator superfamily.

The protein localises to the membrane. In terms of biological role, probable efflux pump; part of the gene cluster that mediates the biosynthesis of griseofulvin. In Penicillium aethiopicum, this protein is Probable efflux pump gsfJ.